The sequence spans 233 residues: Probable 2-phosphosulfolactate phosphatase (233 aa).

It belongs to the ComB family. It depends on Mg(2+) as a cofactor.

The catalysed reaction is (2R)-O-phospho-3-sulfolactate + H2O = (2R)-3-sulfolactate + phosphate. This is Probable 2-phosphosulfolactate phosphatase from Symbiobacterium thermophilum (strain DSM 24528 / JCM 14929 / IAM 14863 / T).